Reading from the N-terminus, the 327-residue chain is Glycoprotein integral membrane protein 1 (327 aa).

The N-terminal stretch at 1 to 23 is a signal peptide; the sequence is MEGGLSAPLSVRLLLFIALPAAG. Residues 24–259 lie on the Extracellular side of the membrane; that stretch reads WLTTNAPRPP…LCRFWSSVVP (236 aa). N44, N62, and N146 each carry an N-linked (GlcNAc...) asparagine glycan. Residues 260 to 280 form a helical membrane-spanning segment; it reads VLFMFLDVMVVGVLGAAGVIA. Over 281-327 the chain is Cytoplasmic; the sequence is VLKLLFPVCENKGILQVDKMNGISVPIILYPDGSEKTAQKLTDKTDI.

The protein localises to the membrane. This chain is Glycoprotein integral membrane protein 1 (Ginm1), found in Mus musculus (Mouse).